Consider the following 239-residue polypeptide: Putative 3-methyladenine DNA glycosylase (239 aa).

This sequence belongs to the DNA glycosylase MPG family.

This chain is Putative 3-methyladenine DNA glycosylase, found in Pseudomonas aeruginosa (strain UCBPP-PA14).